The following is a 354-amino-acid chain: UDP-N-acetylglucosamine--N-acetylmuramyl-(pentapeptide) pyrophosphoryl-undecaprenol N-acetylglucosamine transferase (354 aa).

Residues 11-13, Asn-117, Arg-160, Ser-186, and Gln-288 contribute to the UDP-N-acetyl-alpha-D-glucosamine site; that span reads TGG.

Belongs to the glycosyltransferase 28 family. MurG subfamily.

The protein localises to the cell inner membrane. The catalysed reaction is di-trans,octa-cis-undecaprenyl diphospho-N-acetyl-alpha-D-muramoyl-L-alanyl-D-glutamyl-meso-2,6-diaminopimeloyl-D-alanyl-D-alanine + UDP-N-acetyl-alpha-D-glucosamine = di-trans,octa-cis-undecaprenyl diphospho-[N-acetyl-alpha-D-glucosaminyl-(1-&gt;4)]-N-acetyl-alpha-D-muramoyl-L-alanyl-D-glutamyl-meso-2,6-diaminopimeloyl-D-alanyl-D-alanine + UDP + H(+). The protein operates within cell wall biogenesis; peptidoglycan biosynthesis. In terms of biological role, cell wall formation. Catalyzes the transfer of a GlcNAc subunit on undecaprenyl-pyrophosphoryl-MurNAc-pentapeptide (lipid intermediate I) to form undecaprenyl-pyrophosphoryl-MurNAc-(pentapeptide)GlcNAc (lipid intermediate II). The sequence is that of UDP-N-acetylglucosamine--N-acetylmuramyl-(pentapeptide) pyrophosphoryl-undecaprenol N-acetylglucosamine transferase from Rickettsia canadensis (strain McKiel).